Consider the following 347-residue polypeptide: 8-amino-8-demethylriboflavin N,N-dimethyltransferase (347 aa).

Residues Asp209 and 235–237 (GDF) contribute to the S-adenosyl-L-methionine site.

Belongs to the class I-like SAM-binding methyltransferase superfamily. Cation-independent O-methyltransferase family. Homodimer.

The catalysed reaction is 8-amino-8-demethylriboflavin + 2 S-adenosyl-L-methionine = roseoflavin + 2 S-adenosyl-L-homocysteine + 2 H(+). It functions in the pathway antibiotic biosynthesis. Functionally, catalyzes the S-adenosyl methionine-dependent conversion of 8-amino-8-demethyl-D-riboflavin (AF) into 8-methylamino-8-demethyl-D-riboflavin (MAF) and roseoflavin (RoF), the last two steps in the biosynthesis of the antibiotic roseoflavin. The sequence is that of 8-amino-8-demethylriboflavin N,N-dimethyltransferase from Streptomyces davaonensis (strain DSM 101723 / JCM 4913 / KCC S-0913 / 768).